The following is a 245-amino-acid chain: Ribonuclease PH (245 aa).

Residues Arg86 and 124-126 (GTR) each bind phosphate.

The protein belongs to the RNase PH family. As to quaternary structure, homohexameric ring arranged as a trimer of dimers.

It carries out the reaction tRNA(n+1) + phosphate = tRNA(n) + a ribonucleoside 5'-diphosphate. Phosphorolytic 3'-5' exoribonuclease that plays an important role in tRNA 3'-end maturation. Removes nucleotide residues following the 3'-CCA terminus of tRNAs; can also add nucleotides to the ends of RNA molecules by using nucleoside diphosphates as substrates, but this may not be physiologically important. Probably plays a role in initiation of 16S rRNA degradation (leading to ribosome degradation) during starvation. The polypeptide is Ribonuclease PH (Bacillus cereus (strain B4264)).